We begin with the raw amino-acid sequence, 272 residues long: Putative phosphoenolpyruvate synthase regulatory protein (272 aa).

152–159 is an ADP binding site; that stretch reads GVSRCGKT.

It belongs to the pyruvate, phosphate/water dikinase regulatory protein family. PSRP subfamily.

It carries out the reaction [pyruvate, water dikinase] + ADP = [pyruvate, water dikinase]-phosphate + AMP + H(+). The enzyme catalyses [pyruvate, water dikinase]-phosphate + phosphate + H(+) = [pyruvate, water dikinase] + diphosphate. Bifunctional serine/threonine kinase and phosphorylase involved in the regulation of the phosphoenolpyruvate synthase (PEPS) by catalyzing its phosphorylation/dephosphorylation. This Stutzerimonas stutzeri (strain A1501) (Pseudomonas stutzeri) protein is Putative phosphoenolpyruvate synthase regulatory protein.